The chain runs to 130 residues: Small ribosomal subunit protein uS9 (130 aa).

Belongs to the universal ribosomal protein uS9 family.

This Thioalkalivibrio sulfidiphilus (strain HL-EbGR7) protein is Small ribosomal subunit protein uS9.